A 308-amino-acid polypeptide reads, in one-letter code: Uricase-2 (308 aa).

Catalysis depends on charge relay system residues Lys17 and Thr63. Residues Thr63, Asp64, Phe165, Arg182, Val237, Gln238, and Asn264 each contribute to the urate site. Catalysis depends on His266, which acts as the Charge relay system. Positions 306 to 308 (SKL) match the Microbody targeting signal motif.

It belongs to the uricase family. In terms of assembly, homotetramer. In terms of tissue distribution, expressed predominantly in the uninfected cells of the central tissue of the root nodule. Also expressed in the nodule parenchyma cells and vascular tissue, in the roots, stems and leaves of uninfected adult plants, and in the cotyledons, roots and hypocotyls of developing seedlings. Localized to the metaxylem parenchyma cells and phloem fibers of developing roots.

It localises to the peroxisome. The catalysed reaction is urate + O2 + H2O = 5-hydroxyisourate + H2O2. It functions in the pathway purine metabolism; urate degradation; (S)-allantoin from urate: step 1/3. In terms of biological role, catalyzes the oxidation of uric acid to 5-hydroxyisourate, which is further processed to form (S)-allantoin. This Phaseolus vulgaris (Kidney bean) protein is Uricase-2 (URIII).